Reading from the N-terminus, the 193-residue chain is Ion-translocating oxidoreductase complex subunit A (193 aa).

Helical transmembrane passes span 5–25 (LLLF…FLGL), 39–59 (IGMG…AWMV), 62–82 (FILL…LVIA), 102–122 (LLGI…VALL), 134–154 (AVYG…FAAI), and 171–191 (SIAL…TGLV).

It belongs to the NqrDE/RnfAE family. The complex is composed of six subunits: RnfA, RnfB, RnfC, RnfD, RnfE and RnfG.

Its subcellular location is the cell inner membrane. Part of a membrane-bound complex that couples electron transfer with translocation of ions across the membrane. The chain is Ion-translocating oxidoreductase complex subunit A from Yersinia pestis (strain Pestoides F).